We begin with the raw amino-acid sequence, 455 residues long: 1,4-beta-D-glucan cellobiohydrolase C (455 aa).

Residues 1–19 (MHYSASGLALAFLLPAIQA) form the signal peptide. One can recognise a CBM1 domain in the interval 20-55 (QQTLYGQCGGSGWTGATSCVAGAACSTLNQWYAQCL). Intrachain disulfides connect C27–C44 and C38–C54. The segment at 59-92 (TTTSTTLTTTTSSVTTTSNPGSTTTTSSVTVTAT) is thr-rich linker. The segment at 66–86 (TTTTSSVTTTSNPGSTTTTSS) is disordered. A catalytic region spans residues 93-450 (ASGNPFSGYQ…QAYFVQLLQN (358 aa)). Residue D185 is part of the active site. 2 cysteine pairs are disulfide-bonded: C186/C245 and C377/C424. D231 serves as the catalytic Proton donor. The Nucleophile role is filled by D410.

The protein belongs to the glycosyl hydrolase 6 (cellulase B) family.

The protein localises to the secreted. It catalyses the reaction Hydrolysis of (1-&gt;4)-beta-D-glucosidic linkages in cellulose and cellotetraose, releasing cellobiose from the non-reducing ends of the chains.. The biological conversion of cellulose to glucose generally requires three types of hydrolytic enzymes: (1) Endoglucanases which cut internal beta-1,4-glucosidic bonds; (2) Exocellobiohydrolases that cut the disaccharide cellobiose from the non-reducing end of the cellulose polymer chain; (3) Beta-1,4-glucosidases which hydrolyze the cellobiose and other short cello-oligosaccharides to glucose. Active against carboxymethylcellulose, beta-glucan and lichenan. The polypeptide is 1,4-beta-D-glucan cellobiohydrolase C (cbhC) (Emericella nidulans (strain FGSC A4 / ATCC 38163 / CBS 112.46 / NRRL 194 / M139) (Aspergillus nidulans)).